The following is a 117-amino-acid chain: Immunoglobulin heavy variable 1-84 (117 aa).

An N-terminal signal peptide occupies residues 1–19 (MGWSWIFLFLLSGTAGVHC). The interval 20 to 49 (QIQLQQSGPELVKPGASVKISCKASGYTFT) is framework-1. The 87-residue stretch at 31–117 (VKPGASVKIS…EDSAVYFCAR (87 aa)) folds into the Ig-like domain. Cys-41 and Cys-115 are oxidised to a cystine. The segment at 50–54 (DYYIN) is complementarity-determining-1. A framework-2 region spans residues 55–68 (WVKQRPGQGLEWIG). The complementarity-determining-2 stretch occupies residues 69-85 (WIYPGSGNTKYNEKFKG). Residues 86–117 (KATLTVDTSSSTAYMQLSSLTSEDSAVYFCAR) are framework-3.

The polypeptide is Immunoglobulin heavy variable 1-84 (Mus musculus (Mouse)).